An 830-amino-acid chain; its full sequence is Protein PAM1 (830 aa).

The stretch at 379–400 (LQNSESTLKNEIKELQSQVLSL) forms a coiled coil. Disordered stretches follow at residues 426 to 488 (DNSL…ETSL), 513 to 558 (ALQQ…SQPQ), 648 to 699 (NGMN…NYNI), and 727 to 757 (SRNA…GTSK). A compositionally biased stretch (polar residues) spans 433–444 (PNSNTNGISPSD). The stretch at 481-514 (LSRDETSLKERELEVRMKELELQERELELQRKAL) forms a coiled coil. Low complexity-rich tracts occupy residues 513 to 527 (ALQQ…PPKQ) and 538 to 555 (SGNN…SSYS). Positions 651–699 (NGTQSRLNSLSNQSTFRSQQGPPITQQKSFQNNGGSMRTNRIPSANYNI) are enriched in polar residues. A phosphoserine mark is found at S659 and S732. Low complexity predominate over residues 738 to 753 (QLNSDSPPQLQSLSQN). S767 is modified (phosphoserine). Residues 796-806 (AATANNISTMG) show a composition bias toward polar residues. Residues 796–830 (AATANNISTMGDESRKEDVKEKKKKKFSFFGKRKK) are disordered. Residues 807 to 816 (DESRKEDVKE) show a composition bias toward basic and acidic residues. Basic residues predominate over residues 817–830 (KKKKKFSFFGKRKK).

Belongs to the PAM1/SVL3 family.

Functionally, not known. It is a suppressor of protein phosphatase 2A depletion. This Saccharomyces cerevisiae (strain ATCC 204508 / S288c) (Baker's yeast) protein is Protein PAM1 (PAM1).